Reading from the N-terminus, the 145-residue chain is Plastocyanin, chloroplastic (145 aa).

The transit peptide at 1 to 48 (MASLMRKAAVAPAKATRTTVKASASLQRVAQAAGVAVAGFSLALSANA) directs the protein to the chloroplast. A Plastocyanin-like domain is found at 49 to 145 (ANVKLGADSG…AGMVGKVIVQ (97 aa)). Cu cation-binding residues include H85, C130, H133, and M138.

This sequence belongs to the plastocyanin family. Cu(2+) is required as a cofactor.

It is found in the plastid. Its subcellular location is the chloroplast thylakoid membrane. Participates in electron transfer between P700 and the cytochrome b6-f complex in photosystem I. This chain is Plastocyanin, chloroplastic (PETE), found in Tetradesmus obliquus (Green alga).